The chain runs to 388 residues: Flap endonuclease 1 (388 aa).

The N-domain stretch occupies residues 1 to 104; the sequence is MGILGLSKLI…GELAKRAERR (104 aa). A Mg(2+)-binding site is contributed by Asp-34. 2 residues coordinate DNA: Arg-47 and Arg-70. The Mg(2+) site is built by Asp-86, Glu-158, Glu-160, Asp-179, and Asp-181. The segment at 122–253 is I-domain; sequence QIEKFNRRLV…KRAIELIKSY (132 aa). Position 158 (Glu-158) interacts with DNA. Gly-231 and Asp-233 together coordinate DNA. Asp-233 serves as a coordination point for Mg(2+). Residues 336–344 form an interaction with PCNA region; the sequence is TQVRLDSFF. The interval 355–388 is disordered; it reads AAAKRKAEESKKSANSKKAKIGGGSGAGRGRRPK.

The protein belongs to the XPG/RAD2 endonuclease family. FEN1 subfamily. In terms of assembly, interacts with PCNA. Three molecules of FEN1 bind to one PCNA trimer with each molecule binding to one PCNA monomer. PCNA stimulates the nuclease activity without altering cleavage specificity. Requires Mg(2+) as cofactor. In terms of processing, phosphorylated. Phosphorylation upon DNA damage induces relocalization to the nuclear plasma.

The protein localises to the nucleus. The protein resides in the nucleolus. It is found in the nucleoplasm. Its subcellular location is the mitochondrion. Its function is as follows. Structure-specific nuclease with 5'-flap endonuclease and 5'-3' exonuclease activities involved in DNA replication and repair. During DNA replication, cleaves the 5'-overhanging flap structure that is generated by displacement synthesis when DNA polymerase encounters the 5'-end of a downstream Okazaki fragment. It enters the flap from the 5'-end and then tracks to cleave the flap base, leaving a nick for ligation. Also involved in the long patch base excision repair (LP-BER) pathway, by cleaving within the apurinic/apyrimidinic (AP) site-terminated flap. Acts as a genome stabilization factor that prevents flaps from equilibrating into structures that lead to duplications and deletions. Also possesses 5'-3' exonuclease activity on nicked or gapped double-stranded DNA, and exhibits RNase H activity. Also involved in replication and repair of rDNA and in repairing mitochondrial DNA. The sequence is that of Flap endonuclease 1 from Drosophila grimshawi (Hawaiian fruit fly).